The sequence spans 234 residues: Protein CIST1 (234 aa).

Positions 1–24 (MACPQLPPLLLLVLVVLLKAGVNY) are cleaved as a signal peptide. Over 25 to 180 (NTPFTDIVTS…GPRELHRNPS (156 aa)) the chain is Extracellular. Positions 41-121 (SPVSSLISSP…THPSSGSPSA (81 aa)) are enriched in polar residues. Residues 41–174 (SPVSSLISSP…PAPGDTGPRE (134 aa)) are disordered. A compositionally biased stretch (low complexity) spans 122–140 (ELTPSSHSTLPSSESLTPH). The span at 141 to 159 (WSPTSHSPGTEPLTSTDQT) shows a compositional bias: polar residues. A helical transmembrane segment spans residues 181 to 201 (VVVVVCLLVSLLLIGSVVMAV). Topologically, residues 202 to 234 (RFCHRNESKFENLDEVSMGSVNDRLSFAHHLQE) are cytoplasmic.

It is found in the membrane. The protein is Protein CIST1 of Homo sapiens (Human).